Reading from the N-terminus, the 89-residue chain is MSITPERKQALIEEYKTKDGDTGSPEVQVAILTERIVNLTEHLKTHAKDFHSRRGLLVMVGQRRGLLDYLKRKNQGRYDTLIQRLGLRR.

This sequence belongs to the universal ribosomal protein uS15 family. In terms of assembly, part of the 30S ribosomal subunit. Forms a bridge to the 50S subunit in the 70S ribosome, contacting the 23S rRNA.

Functionally, one of the primary rRNA binding proteins, it binds directly to 16S rRNA where it helps nucleate assembly of the platform of the 30S subunit by binding and bridging several RNA helices of the 16S rRNA. In terms of biological role, forms an intersubunit bridge (bridge B4) with the 23S rRNA of the 50S subunit in the ribosome. This is Small ribosomal subunit protein uS15 from Rhodospirillum centenum (strain ATCC 51521 / SW).